Consider the following 237-residue polypeptide: Endonuclease NucS (237 aa).

The protein belongs to the NucS endonuclease family.

Its subcellular location is the cytoplasm. Functionally, cleaves both 3' and 5' ssDNA extremities of branched DNA structures. The sequence is that of Endonuclease NucS from Saccharolobus islandicus (strain L.S.2.15 / Lassen #1) (Sulfolobus islandicus).